A 120-amino-acid chain; its full sequence is Large ribosomal subunit protein bL19c (120 aa).

It belongs to the bacterial ribosomal protein bL19 family.

It is found in the plastid. The protein resides in the chloroplast. The polypeptide is Large ribosomal subunit protein bL19c (rpl19) (Trieres chinensis (Marine centric diatom)).